We begin with the raw amino-acid sequence, 204 residues long: Adenylyl-sulfate kinase (204 aa).

34–41 is a binding site for ATP; sequence GLSGSGKS. The active-site Phosphoserine intermediate is the Ser108.

This sequence belongs to the APS kinase family.

The catalysed reaction is adenosine 5'-phosphosulfate + ATP = 3'-phosphoadenylyl sulfate + ADP + H(+). It functions in the pathway sulfur metabolism; hydrogen sulfide biosynthesis; sulfite from sulfate: step 2/3. In terms of biological role, catalyzes the synthesis of activated sulfate. This is Adenylyl-sulfate kinase from Phocaeicola vulgatus (strain ATCC 8482 / DSM 1447 / JCM 5826 / CCUG 4940 / NBRC 14291 / NCTC 11154) (Bacteroides vulgatus).